A 423-amino-acid polypeptide reads, in one-letter code: Serine--tRNA ligase (423 aa).

229-231 is an L-serine binding site; it reads TAE. 260-262 provides a ligand contact to ATP; sequence RRE. Glu-283 lines the L-serine pocket. 347–350 provides a ligand contact to ATP; that stretch reads EISS. Ser-383 is a binding site for L-serine.

The protein belongs to the class-II aminoacyl-tRNA synthetase family. Type-1 seryl-tRNA synthetase subfamily. In terms of assembly, homodimer. The tRNA molecule binds across the dimer.

The protein localises to the cytoplasm. The catalysed reaction is tRNA(Ser) + L-serine + ATP = L-seryl-tRNA(Ser) + AMP + diphosphate + H(+). It catalyses the reaction tRNA(Sec) + L-serine + ATP = L-seryl-tRNA(Sec) + AMP + diphosphate + H(+). It functions in the pathway aminoacyl-tRNA biosynthesis; selenocysteinyl-tRNA(Sec) biosynthesis; L-seryl-tRNA(Sec) from L-serine and tRNA(Sec): step 1/1. In terms of biological role, catalyzes the attachment of serine to tRNA(Ser). Is also able to aminoacylate tRNA(Sec) with serine, to form the misacylated tRNA L-seryl-tRNA(Sec), which will be further converted into selenocysteinyl-tRNA(Sec). In Trichlorobacter lovleyi (strain ATCC BAA-1151 / DSM 17278 / SZ) (Geobacter lovleyi), this protein is Serine--tRNA ligase.